The primary structure comprises 410 residues: Multidrug resistance protein MdtM (410 aa).

Residues 1 to 11 (MPRFFARHAAT) are Cytoplasmic-facing. A helical transmembrane segment spans residues 12-32 (LFFPMALILYDFAAYLSTDLI). Residues 33-48 (QPGIINVVRDFNADVS) lie on the Periplasmic side of the membrane. A helical membrane pass occupies residues 49-69 (LAPAAVSLYLAGGMALQWLLG). The Cytoplasmic portion of the chain corresponds to 70-78 (PLSDRIGRK). A helical membrane pass occupies residues 79–99 (PVLITGALIFTLACAATMFTT). At 100–103 (SMTQ) the chain is on the periplasmic side. A helical transmembrane segment spans residues 104–124 (FLIARAIQGTSICFIATVGYV). Topologically, residues 125-140 (TVQEAFGQTKGIKLMA) are cytoplasmic. The chain crosses the membrane as a helical span at residues 141 to 161 (IITSIVLIAPIIGPLSGAALM). At 162-167 (HFVHWK) the chain is on the periplasmic side. A helical transmembrane segment spans residues 168–188 (VLFAIIAVMGFISFVGLLLAM). Over 189–216 (PETVKRGAVPFSAKSVLRDFRNVFCNRL) the chain is Cytoplasmic. The chain crosses the membrane as a helical span at residues 217 to 237 (FLFGAATISLSYIPMMSWVAV). Topologically, residues 238-251 (SPVILIDAGGLTTS) are periplasmic. The chain crosses the membrane as a helical span at residues 252–272 (QFAWTQVPVFGAVIVANAIVA). Residues 273–282 (RFVKDPTEPR) are Cytoplasmic-facing. A helical membrane pass occupies residues 283–303 (FIWRAVPIQLVGLALLIIGNL). Residues 304-307 (LSPH) are Periplasmic-facing. Residues 308–328 (VWLWSVLGTSLYAFGIGLIFP) form a helical membrane-spanning segment. Residues 329-348 (TLFRFTLFSNNLPKGTVSAS) are Cytoplasmic-facing. The helical transmembrane segment at 349–369 (LNMVILMVMSVSVEIGRWLWF) threads the bilayer. Topologically, residues 370 to 373 (NGGR) are periplasmic. The helical transmembrane segment at 374–394 (LPFHLLAVVAGVIVVFTLAGL) threads the bilayer. Residues 395-410 (LNRVRQHQAAELAEEQ) lie on the Cytoplasmic side of the membrane.

Belongs to the major facilitator superfamily.

The protein localises to the cell inner membrane. Functionally, proton-dependent efflux pump. Confers resistance to a broad spectrum of chemically unrelated substrates. This Escherichia coli O157:H7 protein is Multidrug resistance protein MdtM (mdtM).